Here is a 149-residue protein sequence, read N- to C-terminus: 3-hydroxyacyl-[acyl-carrier-protein] dehydratase FabZ (149 aa).

H52 is an active-site residue.

This sequence belongs to the thioester dehydratase family. FabZ subfamily.

It is found in the cytoplasm. The enzyme catalyses a (3R)-hydroxyacyl-[ACP] = a (2E)-enoyl-[ACP] + H2O. Involved in unsaturated fatty acids biosynthesis. Catalyzes the dehydration of short chain beta-hydroxyacyl-ACPs and long chain saturated and unsaturated beta-hydroxyacyl-ACPs. This is 3-hydroxyacyl-[acyl-carrier-protein] dehydratase FabZ from Cupriavidus necator (strain ATCC 17699 / DSM 428 / KCTC 22496 / NCIMB 10442 / H16 / Stanier 337) (Ralstonia eutropha).